A 323-amino-acid chain; its full sequence is tRNA-modifying protein YgfZ (323 aa).

Folate-binding residues include tryptophan 29 and tryptophan 182.

This sequence belongs to the tRNA-modifying YgfZ family.

Its subcellular location is the cytoplasm. Its function is as follows. Folate-binding protein involved in regulating the level of ATP-DnaA and in the modification of some tRNAs. It is probably a key factor in regulatory networks that act via tRNA modification, such as initiation of chromosomal replication. In Vibrio cholerae serotype O1 (strain ATCC 39541 / Classical Ogawa 395 / O395), this protein is tRNA-modifying protein YgfZ.